Reading from the N-terminus, the 163-residue chain is Succinate dehydrogenase assembly factor 2-B, mitochondrial (163 aa).

A mitochondrion-targeting transit peptide spans Met-1–Leu-23.

This sequence belongs to the SDHAF2 family. Interacts with the flavoprotein subunit within the SDH catalytic dimer.

Its subcellular location is the mitochondrion matrix. Plays an essential role in the assembly of succinate dehydrogenase (SDH), an enzyme complex (also referred to as respiratory complex II) that is a component of both the tricarboxylic acid (TCA) cycle and the mitochondrial electron transport chain, and which couples the oxidation of succinate to fumarate with the reduction of ubiquinone (coenzyme Q) to ubiquinol. Required for flavinylation (covalent attachment of FAD) of the flavoprotein subunit of the SDH catalytic dimer. In Drosophila ananassae (Fruit fly), this protein is Succinate dehydrogenase assembly factor 2-B, mitochondrial.